Here is a 717-residue protein sequence, read N- to C-terminus: Nuclear factor of activated T-cells, cytoplasmic 1 (717 aa).

A disordered region spans residues 1–38 (MPNTSFPVPSKFPLGPPAAVCGSGETLRPAPPSGGTMK). A calcineurin-binding region spans residues 120–125 (PRIEIT). The interval 128 to 220 (LGLHHGSGQF…CVSPKTTDPE (93 aa)) is transactivation domain A (TAD-A). The disordered stretch occupies residues 202 to 298 (PQTSPWQSPC…PHGSPRVSVT (97 aa)). Polar residues predominate over residues 203–216 (QTSPWQSPCVSPKT). 2 repeat units span residues 205 to 221 (SPWQ…DPEE) and 235 to 251 (SPRH…ITEE). Residues 205–300 (SPWQSPCVSP…GSPRVSVTED (96 aa)) are 3 X SP repeats. Ser235 and Ser239 each carry phosphoserine. The segment covering 238 to 250 (HSPSTSPRASITE) has biased composition (polar residues). Residue Ser247 is modified to Phosphoserine; by PKA. The Nuclear localization signal signature appears at 267-269 (KRK). 2 positions are modified to phosphoserine; by PKA: Ser271 and Ser296. Copy 3 of the repeat occupies 284 to 300 (SPTPSPHGSPRVSVTED). Positions 312-323 (SAIVAAINALTT) match the Nuclear export signal motif. The RHD domain occupies 411 to 593 (PSLPALDWQL…NPIECSQRSA (183 aa)). The DNA-binding element occupies 440 to 447 (RAHYETEG). A Nuclear localization signal motif is present at residues 683–685 (KRK).

Member of the multicomponent NFATC transcription complex that consists of at least two components, a pre-existing cytoplasmic component NFATC2 and an inducible nuclear component NFATC1. Other members such as NFATC4, NFATC3 or members of the activating protein-1 family, MAF, GATA4 and Cbp/p300 can also bind the complex. NFATC proteins bind to DNA as monomers. Interacts with HOMER2 and HOMER3; this interaction may compete with calcineurin/PPP3CA-binding and hence prevent NFATC1 dephosphorylation and activation. Interacts with TLE6/GRG6. Phosphorylated by NFATC-kinase and GSK3B; phosphorylation induces NFATC1 nuclear exit and dephosphorylation by calcineurin promotes nuclear import. Phosphorylation by PKA and DYRK2 negatively modulates nuclear accumulation, and promotes subsequent phosphorylation by GSK3B or casein kinase 1. In terms of tissue distribution, expressed in the submandibular gland (at protein level). Expressed in basal epidermal cells (at protein level). Expressed in spleen, skeletal muscle and skin. Express in the lung and thymus. Weakly expressed in heart, brain, liver and kidney. Not expressed in testis. Expressed in osteoclasts. Also expressed during TNFSF11/RANKL-induced differentiation of bone marrow-derived macrophages to osteoclasts.

The protein localises to the cytoplasm. It localises to the nucleus. Its function is as follows. Plays a role in the inducible expression of cytokine genes in T-cells, especially in the induction of the IL-2 or IL-4 gene transcription. Also controls gene expression in embryonic cardiac cells. Could regulate not only the activation and proliferation but also the differentiation and programmed death of T-lymphocytes as well as lymphoid and non-lymphoid cells. Required for osteoclastogenesis and regulates many genes important for osteoclast differentiation and function. The sequence is that of Nuclear factor of activated T-cells, cytoplasmic 1 (Nfatc1) from Mus musculus (Mouse).